Reading from the N-terminus, the 487-residue chain is Lysophospholipid acyltransferase 5 (487 aa).

A2 carries the N-acetylalanine modification. 6 consecutive transmembrane segments (helical) span residues 44–64 (LIFS…YLFY), 67–87 (SYLI…FNFG), 111–131 (ITAV…GYYY), 178–198 (ILGV…GAFL), 236–256 (LGLV…EDYL), and 285–305 (VTCW…FNGF). A glycan (N-linked (GlcNAc...) asparagine) is linked at N308. Residues N338 and H374 contribute to the active site. 3 consecutive transmembrane segments (helical) span residues 364 to 384 (GLSL…LICF), 422 to 442 (LVQQ…FCLF), and 453 to 473 (SIYF…PYVY). Positions 484–487 (KKRE) match the Di-lysine motif motif.

Belongs to the membrane-bound acyltransferase family.

It is found in the endoplasmic reticulum membrane. It catalyses the reaction a 1-acyl-sn-glycero-3-phosphocholine + an acyl-CoA = a 1,2-diacyl-sn-glycero-3-phosphocholine + CoA. It carries out the reaction a 1-acyl-sn-glycero-3-phosphoethanolamine + an acyl-CoA = a 1,2-diacyl-sn-glycero-3-phosphoethanolamine + CoA. The catalysed reaction is a 1-acyl-sn-glycero-3-phospho-L-serine + an acyl-CoA = a 1,2-diacyl-sn-glycero-3-phospho-L-serine + CoA. The enzyme catalyses (9Z,12Z)-octadecadienoyl-CoA + a 1-acyl-sn-glycero-3-phosphocholine = 1-acyl-2-(9Z,12Z)-octadecadienoyl-sn-glycero-3-phosphocholine + CoA. It catalyses the reaction (5Z,8Z,11Z,14Z)-eicosatetraenoyl-CoA + a 1-acyl-sn-glycero-3-phosphocholine = 1-acyl-2-(5Z,8Z,11Z,14Z-eicosatetraenoyl)-sn-glycero-3-phosphocholine + CoA. It carries out the reaction dodecanoyl-CoA + 1-hexadecanoyl-sn-glycero-3-phosphocholine = 1-hexadecanoyl-2-dodecanoyl-sn-glycero-3-phosphocholine + CoA. The catalysed reaction is octadecanoyl-CoA + 1-hexadecanoyl-sn-glycero-3-phosphocholine = 1-hexadecanoyl-2-octadecanoyl-sn-glycero-3-phosphocholine + CoA. The enzyme catalyses 1-dodecanoyl-sn-glycero-3-phosphocholine + hexadecanoyl-CoA = 1-dodecanoyl-2-hexadecanoyl-sn-glycero-3-phosphocholine + CoA. It catalyses the reaction 1-tetradecanoyl-sn-glycero-3-phosphocholine + hexadecanoyl-CoA = 1-tetradecanoyl-2-hexadecanoyl-sn-glycero-3-phosphocholine + CoA. It carries out the reaction 1-hexadecanoyl-sn-glycero-3-phosphocholine + hexadecanoyl-CoA = 1,2-dihexadecanoyl-sn-glycero-3-phosphocholine + CoA. The catalysed reaction is 1-octadecanoyl-sn-glycero-3-phosphocholine + hexadecanoyl-CoA = 1-octadecanoyl-2-hexadecanoyl-sn-glycero-3-phosphocholine + CoA. The enzyme catalyses 1-(9Z-octadecenoyl)-sn-glycero-3-phosphocholine + hexadecanoyl-CoA = 1-(9Z-octadecenoyl)-2-hexadecanoyl-sn-glycero-3-phosphocholine + CoA. It catalyses the reaction (9Z)-hexadecenoyl-CoA + 1-hexadecanoyl-sn-glycero-3-phosphocholine = 1-hexadecanoyl-2-(9Z-hexadecenoyl)-sn-glycero-3-phosphocholine + CoA. It carries out the reaction 1-hexadecanoyl-sn-glycero-3-phosphocholine + (9Z)-octadecenoyl-CoA = 1-hexadecanoyl-2-(9Z-octadecenoyl)-sn-glycero-3-phosphocholine + CoA. The catalysed reaction is (9Z,12Z)-octadecadienoyl-CoA + 1-hexadecanoyl-sn-glycero-3-phosphocholine = 1-hexadecanoyl-2-(9Z,12Z-octadecadienoyl)-sn-glycero-3-phosphocholine + CoA. The enzyme catalyses 1-dodecanoyl-sn-glycero-3-phosphocholine + (5Z,8Z,11Z,14Z)-eicosatetraenoyl-CoA = 1-dodecanoyl-2-(5Z,8Z,11Z,14Z)-eicosatetraenoyl-sn-glycero-3-phosphocholine + CoA. It catalyses the reaction (5Z,8Z,11Z,14Z)-eicosatetraenoyl-CoA + 1-hexadecanoyl-sn-glycero-3-phosphocholine = 1-hexadecanoyl-2-(5Z,8Z,11Z,14Z-eicosatetraenoyl)-sn-glycero-3-phosphocholine + CoA. It carries out the reaction 1-octadecanoyl-sn-glycero-3-phosphocholine + (5Z,8Z,11Z,14Z)-eicosatetraenoyl-CoA = 1-octadecanoyl-2-(5Z,8Z,11Z,14Z-eicosatetraenoyl)-sn-glycero-3-phosphocholine + CoA. The catalysed reaction is 1-eicosanoyl-sn-glycero-3-phosphocholine + (5Z,8Z,11Z,14Z)-eicosatetraenoyl-CoA = 1-eicosanoyl-2-(5Z,8Z,11Z,14Z)-eicosatetraenoyl-sn-glycero-3-phosphocholine + CoA. The enzyme catalyses 1-(9Z-octadecenoyl)-sn-glycero-3-phosphocholine + (9Z)-octadecenoyl-CoA = 1,2-di-(9Z-octadecenoyl)-sn-glycero-3-phosphocholine + CoA. It catalyses the reaction 1-(9Z-octadecenoyl)-sn-glycero-3-phosphocholine + (9Z,12Z)-octadecadienoyl-CoA = 1-(9Z)-octadecenoyl-2-(9Z,12Z)-octadecadienoyl-sn-glycero-3-phosphocholine + CoA. It carries out the reaction 1-(9Z-octadecenoyl)-sn-glycero-3-phosphocholine + (5Z,8Z,11Z,14Z)-eicosatetraenoyl-CoA = 1-(9Z)-octadecenoyl-2-(5Z,8Z,11Z,14Z)-icosatetraenoyl-sn-glycero-3-phosphocholine + CoA. The catalysed reaction is a 1-acyl-sn-glycero-3-phosphoethanolamine + (9Z,12Z)-octadecadienoyl-CoA = 1-acyl-2-(9Z,12Z)-octadecadienoyl-sn-glycero-3-phosphoethanolamine + CoA. The enzyme catalyses 1-(9Z-octadecenoyl)-sn-glycero-3-phosphoethanolamine + (9Z,12Z)-octadecadienoyl-CoA = 1-(9Z)-octadecenoyl-2-(9Z,12Z)-octadecadienoyl-sn-glycero-3-phosphoethanolamine + CoA. It catalyses the reaction 1-(10Z-heptadecenoyl)-sn-glycero-3-phosphoethanolamine + (9Z,12Z)-octadecadienoyl-CoA = 1-(10Z-heptadecenoyl)-2-(9Z,12Z-octadecadienoyl)-sn-glycero-3-phosphoethanolamine + CoA. It carries out the reaction a 1-acyl-sn-glycero-3-phosphoethanolamine + (5Z,8Z,11Z,14Z)-eicosatetraenoyl-CoA = 1-acyl-2-(5Z,8Z,11Z,14Z)-eicosatetraenoyl-sn-glycero-3-phosphoethanolamine + CoA. The catalysed reaction is 1-hexadecanoyl-sn-glycero-3-phosphoethanolamine + (5Z,8Z,11Z,14Z)-eicosatetraenoyl-CoA = 1-hexadecanoyl-2-(5Z,8Z,11Z,14Z-eicosatetraenoyl)-sn-glycero-3-phosphoethanolamine + CoA. The enzyme catalyses 1-(9Z-octadecenoyl)-sn-glycero-3-phosphoethanolamine + (5Z,8Z,11Z,14Z)-eicosatetraenoyl-CoA = 1-(9Z)-octadecenoyl-2-(5Z,8Z,11Z,14Z)-eicosatetraenoyl-sn-glycero-3-phosphoethanolamine + CoA. It catalyses the reaction 1-(10Z-heptadecenoyl)-sn-glycero-3-phosphoethanolamine + (5Z,8Z,11Z,14Z)-eicosatetraenoyl-CoA = 1-(10Z-heptadecenoyl)-2-(5Z,8Z,11Z,14Z-eicosatetraenoyl)-sn-glycero-3-phosphoethanolamine + CoA. It carries out the reaction a 1-O-(1Z-alkenyl)-sn-glycero-3-phosphoethanolamine + (5Z,8Z,11Z,14Z)-eicosatetraenoyl-CoA = 1-O-(1Z)-alkenyl-2-(5Z,8Z,11Z,14Z)-eicosatetraenoyl-sn-glycero-3-phosphoethanolamine + CoA. The catalysed reaction is a 1-acyl-sn-glycero-3-phospho-L-serine + (9Z,12Z)-octadecadienoyl-CoA = 1-acyl-2-(9Z,12Z-octadecadienoyl)-sn-glycero-3-phospho-L-serine + CoA. The enzyme catalyses a 1-acyl-sn-glycero-3-phospho-L-serine + (5Z,8Z,11Z,14Z)-eicosatetraenoyl-CoA = 1-acyl-2-(5Z,8Z,11Z,14Z-eicosatetraenoyl)-sn-glycero-3-phospho-L-serine + CoA. It catalyses the reaction 1-hexadecanoyl-sn-glycero-3-phospho-L-serine + (9Z)-octadecenoyl-CoA = 1-hexadecanoyl-2-(9Z-octadecenoyl)-sn-glycero-3-phospho-L-serine + CoA. It carries out the reaction 1-(9Z-octadecenoyl)-sn-glycero-3-phospho-L-serine + (9Z)-octadecenoyl-CoA = 1,2-di-(9Z)-octadecenoyl-sn-glycero-3-phospho-L-serine + CoA. The catalysed reaction is 1-hexadecanoyl-sn-glycero-3-phospho-L-serine + (9Z,12Z)-octadecadienoyl-CoA = 1-hexadecanoyl-2-(9Z,12Z-octadecadienoyl)-sn-glycero-3-phospho-L-serine + CoA. The enzyme catalyses 1-(9Z-octadecenoyl)-sn-glycero-3-phospho-L-serine + (9Z,12Z)-octadecadienoyl-CoA = 1-(9Z-octadecenoyl)-2-(9Z,12Z-octadienoyl)-sn-glycero-3-phospho-L-serine + CoA. It catalyses the reaction 1-hexadecanoyl-sn-glycero-3-phospho-L-serine + (5Z,8Z,11Z,14Z)-eicosatetraenoyl-CoA = 1-hexadecanoyl-2-(5Z,8Z,11Z,14Z-eicosatetraenoyl)-sn-glycero-3-phospho-L-serine + CoA. It carries out the reaction 1-(9Z-octadecenoyl)-sn-glycero-3-phospho-L-serine + (5Z,8Z,11Z,14Z)-eicosatetraenoyl-CoA = 1-(9Z-octadecenoyl)-2-(5Z,8Z,11Z,14Z-eicosatetraenoyl)-sn-glycero-3-phospho-L-serine + CoA. It participates in lipid metabolism; phospholipid metabolism. Its function is as follows. Lysophospholipid O-acyltransferase (LPLAT) that catalyzes the reacylation step of the phospholipid remodeling process also known as the Lands cycle. Catalyzes transfer of the fatty acyl chain from fatty acyl-CoA to 1-acyl lysophospholipid to form various classes of phospholipids. Converts 1-acyl lysophosphatidylcholine (LPC) into phosphatidylcholine (PC) (LPCAT activity), 1-acyl lysophosphatidylserine (LPS) into phosphatidylserine (PS) (LPSAT activity) and 1-acyl lysophosphatidylethanolamine (LPE) into phosphatidylethanolamine (PE) (LPEAT activity). Favors polyunsaturated fatty acyl-CoAs as acyl donors compared to saturated fatty acyl-CoAs. Has higher activity for LPC acyl acceptors compared to LPEs and LPSs. Can also transfer the fatty acyl chain from fatty acyl-CoA to 1-O-alkyl lysophospholipid or 1-O-alkenyl lysophospholipid with lower efficiency. Acts as a major LPC O-acyltransferase in liver and intestine. As a component of the liver X receptor/NR1H3 or NR1H2 signaling pathway, mainly catalyzes the incorporation of arachidonate into PCs of endoplasmic reticulum (ER) membranes, increasing membrane dynamics and enabling triacylglycerols transfer to nascent very low-density lipoprotein (VLDL) particles. Promotes processing of sterol regulatory protein SREBF1 in hepatocytes, likely by facilitating the translocation of SREBF1-SCAP complex from ER to the Golgi apparatus. Participates in mechanisms by which the liver X receptor/NR1H3 or NR1H2 signaling pathway counteracts lipid-induced ER stress response and inflammation. Down-regulates hepatic inflammation by limiting arachidonic acid availability for synthesis of inflammatory eicosanoids, such as prostaglandins. In enterocytes, acts as a component of a gut-brain feedback loop that coordinates dietary lipid absorption and food intake. Regulates the abundance of PCs containing linoleate and arachidonate in enterocyte membranes, enabling passive diffusion of fatty acids and cholesterol across the membrane for efficient chylomicron assembly. In the intestinal crypt, acts as a component of dietary-responsive phospholipid-cholesterol axis, regulating the biosynthesis of cholesterol and its mitogenic effects on intestinal stem cells. This Rattus norvegicus (Rat) protein is Lysophospholipid acyltransferase 5 (Lpcat3).